We begin with the raw amino-acid sequence, 2731 residues long: Putative mediator of RNA polymerase II transcription subunit 12 (2731 aa).

Coiled-coil stretches lie at residues 5–37, 75–108, 141–189, and 275–304; these read QQIL…QQQQ, HIQQ…QQVH, QQIH…QQQQ, and IQQL…QQQQ. Disordered regions lie at residues 29-57 and 101-145; these read QQQM…HMIH and QQQQ…QIHQ. Residues 310-320 show a composition bias toward low complexity; it reads QPQQQQQQQQP. Disordered stretches follow at residues 310–376, 432–451, 685–708, and 1251–1341; these read QPQQ…DDKS, TQKS…RPVP, LGHG…QQPQ, and RNNN…QQKS. Over residues 327 to 337 the composition is skewed to polar residues; the sequence is QNPSYHSQSQI. The span at 347–361 shows a compositional bias: basic and acidic residues; sequence KKYEIQKPADKKELG. Residues 688 to 701 are compositionally biased toward basic residues; it reads GHGHGHGHHSHSHS. Low complexity predominate over residues 1251-1268; the sequence is RNNNNNNKNKNNNKQSNN. 2 stretches are compositionally biased toward acidic residues: residues 1275 to 1298 and 1305 to 1326; these read NGEE…DNDE and NDNE…DDQM. Coiled coils occupy residues 1316–1344 and 1375–1433; these read EDED…SNEN and KLKK…DEEL. 6 disordered regions span residues 1778-1825, 1892-1958, 2212-2258, 2307-2351, 2472-2532, and 2705-2731; these read HDDN…NNNG, TQSS…NNTT, SSSS…NNVK, TSSV…QQQQ, EIEK…KPQT, and HQQI…NNYK. Low complexity-rich tracts occupy residues 1783-1824, 1892-1909, 1916-1958, 2212-2250, 2307-2322, 2337-2351, 2472-2501, 2508-2532, and 2705-2720; these read ENNN…NNNN, TQSS…QSPT, NSTN…NNTT, SSSS…QQQQ, TSSV…STTS, QQQT…QQQQ, EIEK…HQQL, LQQQ…KPQT, and HQQI…HQQQ. Positions 2239 to 2270 form a coiled coil; it reads TNQQQQQQQQQQADQKNNVKKKLHELYQKIKS. Residues 2336 to 2363 adopt a coiled-coil conformation; sequence LQQQTSQQQQQQQQQQQQQSQQHQQQQQ. Positions 2523–2662 form a coiled coil; the sequence is QQLQQQKPQT…QQQQQQLQQL (140 aa). Residues 2721–2731 show a composition bias toward polar residues; it reads KCSTTKYNNYK.

This sequence belongs to the Mediator complex subunit 12 family. Component of the Mediator complex.

Its subcellular location is the nucleus. Its function is as follows. Component of the Mediator complex, a coactivator involved in the regulated transcription of nearly all RNA polymerase II-dependent genes. Mediator functions as a bridge to convey information from gene-specific regulatory proteins to the basal RNA polymerase II transcription machinery. Mediator is recruited to promoters by direct interactions with regulatory proteins and serves as a scaffold for the assembly of a functional preinitiation complex with RNA polymerase II and the general transcription factors. In Dictyostelium discoideum (Social amoeba), this protein is Putative mediator of RNA polymerase II transcription subunit 12 (med12).